A 171-amino-acid chain; its full sequence is Inosine/xanthosine triphosphatase (171 aa).

Residue 8-13 (TTNPAK) coordinates substrate. 2 residues coordinate Mg(2+): glutamate 38 and glutamine 68.

It belongs to the YjjX NTPase family. In terms of assembly, homodimer. Mg(2+) is required as a cofactor. The cofactor is Mn(2+).

The enzyme catalyses XTP + H2O = XDP + phosphate + H(+). The catalysed reaction is ITP + H2O = IDP + phosphate + H(+). Functionally, phosphatase that hydrolyzes non-canonical purine nucleotides such as XTP and ITP to their respective diphosphate derivatives. Probably excludes non-canonical purines from DNA/RNA precursor pool, thus preventing their incorporation into DNA/RNA and avoiding chromosomal lesions. This chain is Inosine/xanthosine triphosphatase, found in Citrobacter koseri (strain ATCC BAA-895 / CDC 4225-83 / SGSC4696).